Reading from the N-terminus, the 513-residue chain is Carotenoid isomerooxygenase (513 aa).

Residues H184, H242, H312, and H503 each coordinate Fe cation.

This sequence belongs to the carotenoid oxygenase family. Requires Fe(2+) as cofactor.

The enzyme catalyses all-trans-zeaxanthin + O2 = (3R)-11-cis-3-hydroxyretinal + (3R)-all-trans-3-hydroxyretinal. Its pathway is cofactor metabolism; retinol metabolism. Functionally, catalyzes the oxidative cleavage at the 15,15'-double bond of carotenoids and the simultaneous all-trans to 11-cis isomerization of one cleavage product. Carotenoids like 11-cis retinal can promote visual pigment biogenesis in the dark. Essential for the biosynthesis of the 3-hydroxyretinal chromophore of rhodopsin from zeaxanthin and for proper photoreceptor development. This is Carotenoid isomerooxygenase (ninaB) from Galleria mellonella (Greater wax moth).